A 259-amino-acid chain; its full sequence is Small ribosomal subunit protein uS2 (259 aa).

This sequence belongs to the universal ribosomal protein uS2 family.

The polypeptide is Small ribosomal subunit protein uS2 (Streptococcus pneumoniae (strain Hungary19A-6)).